A 253-amino-acid chain; its full sequence is Imidazole glycerol phosphate synthase subunit HisF (253 aa).

Catalysis depends on residues Asp-11 and Asp-130.

It belongs to the HisA/HisF family. Heterodimer of HisH and HisF.

The protein localises to the cytoplasm. The enzyme catalyses 5-[(5-phospho-1-deoxy-D-ribulos-1-ylimino)methylamino]-1-(5-phospho-beta-D-ribosyl)imidazole-4-carboxamide + L-glutamine = D-erythro-1-(imidazol-4-yl)glycerol 3-phosphate + 5-amino-1-(5-phospho-beta-D-ribosyl)imidazole-4-carboxamide + L-glutamate + H(+). It participates in amino-acid biosynthesis; L-histidine biosynthesis; L-histidine from 5-phospho-alpha-D-ribose 1-diphosphate: step 5/9. In terms of biological role, IGPS catalyzes the conversion of PRFAR and glutamine to IGP, AICAR and glutamate. The HisF subunit catalyzes the cyclization activity that produces IGP and AICAR from PRFAR using the ammonia provided by the HisH subunit. The chain is Imidazole glycerol phosphate synthase subunit HisF from Thermotoga sp. (strain RQ2).